We begin with the raw amino-acid sequence, 7968 residues long: Obscurin (7968 aa).

Ig-like domains follow at residues 10–100 (PRFL…LQVD), 110–202 (PHFL…LVVD), 236–322 (PASP…QTYS), 331–414 (PAVP…RTVA), and 420–508 (GNLL…VSAP). The cysteines at positions 31 and 82 are disulfide-linked. The interval 228–249 (EAMRAEGAPASPPSTGTRTCTV) is disordered. Residues 240–249 (PSTGTRTCTV) are compositionally biased toward polar residues. Intrachain disulfides connect cysteine 259–cysteine 311 and cysteine 354–cysteine 404. A Phosphoserine modification is found at serine 395. The region spanning 515–612 (PPVDPVVKAR…FPGTVHLAPK (98 aa)) is the Fibronectin type-III 1 domain. Ig-like domains follow at residues 619-698 (LKAV…MEVR), 701-790 (PGLT…YQLS), 798-884 (LHKD…LRVS), 886-977 (PKVV…DVKE), 978-1066 (PKVV…FRLH), 1070-1161 (PKMM…HITE), 1162-1252 (PKGV…LHIT), 1254-1345 (PKAV…DVSE), 1346-1432 (PKAV…LSFS), 1438-1524 (PKVV…LSFH), 1530-1621 (PKAV…HVAE), and 1622-1719 (PKVV…PQIS). Cystine bridges form between cysteine 819-cysteine 870, cysteine 912-cysteine 962, cysteine 1004-cysteine 1054, cysteine 1096-cysteine 1146, cysteine 1188-cysteine 1238, cysteine 1280-cysteine 1330, cysteine 1372-cysteine 1422, cysteine 1464-cysteine 1514, cysteine 1556-cysteine 1606, cysteine 1648-cysteine 1698, cysteine 1723-cysteine 1791, and cysteine 1830-cysteine 1880. In terms of domain architecture, Fibronectin type-III 2 spans 1731-1808 (KEHEDIILTA…DFPVQVEEVA (78 aa)). 29 Ig-like domains span residues 1809-1894 (AKFC…LTVS), 1896-1982 (PRVV…AALR), 1987-2071 (PVLF…AKLT), 2077-2162 (VRLV…LVVT), 2165-2249 (PVSF…ASVK), 2289-2380 (PVTL…QSIT), 2468-2559 (PVVL…REVT), 2564-2643 (LQDA…LEVR), 2646-2730 (PVVF…ARVR), 2736-2823 (VGIT…LIVR), 2826-2908 (PAAI…STAS), 2920-2999 (EELT…AQLL), 3003-3092 (RRVH…LRVT), 3095-3183 (PSVF…VHAR), 3184-3268 (PVRF…ATLT), 3273-3356 (PAQF…ASLT), 3359-3444 (PMPA…ATLT), 3449-3532 (PAKF…ATLT), 3537-3620 (PARF…AMLT), 3625-3708 (PIKF…AMLT), 3713-3796 (PSKF…ATLT), 3801-3884 (PARF…ATLT), 3890-3973 (PVFR…ATLT), 3978-4062 (PVRF…ASLS), 4068-4160 (PKFK…PEVT), 4171-4239 (TADE…NHAS), 4248-4337 (PEVT…LKVT), 4340-4427 (NTVV…FLTV), and 4430-4518 (WRLE…ARLT). Disulfide bonds link cysteine 2187-cysteine 2237, cysteine 2311-cysteine 2361, and cysteine 2490-cysteine 2540. Residues cysteine 2668 and cysteine 2718 are joined by a disulfide bond. Cystine bridges form between cysteine 2848–cysteine 2898 and cysteine 2937–cysteine 2987. Phosphoserine is present on serine 2889. 12 disulfide bridges follow: cysteine 3117–cysteine 3167, cysteine 3206–cysteine 3256, cysteine 3295–cysteine 3344, cysteine 3383–cysteine 3432, cysteine 3471–cysteine 3520, cysteine 3559–cysteine 3608, cysteine 3647–cysteine 3696, cysteine 3735–cysteine 3784, cysteine 3823–cysteine 3872, cysteine 3911–cysteine 3961, cysteine 4000–cysteine 4050, and cysteine 4089–cysteine 4141. Serine 4015 is subject to Phosphoserine. Cysteine 4453 and cysteine 4508 are joined by a disulfide. Residues 4525–4619 (PPEDAEVVAR…LPQTVRLAEP (95 aa)) enclose the Fibronectin type-III 3 domain. One can recognise an Ig-like 47 domain in the interval 4624 to 4714 (PPQPSAPESR…AAATFQVALS (91 aa)). Residues 4749–4785 (MSREPTLDSISELPEEDGRSQRLPQEAEEVAPDLSEG) are disordered. The residue at position 4750 (serine 4750) is a Phosphoserine. Phosphothreonine is present on threonine 4754. At serine 4757 the chain carries Phosphoserine. Phosphothreonine is present on threonine 4788. The residue at position 4805 (serine 4805) is a Phosphoserine. The interval 4820–4860 (LKKAGRPGTSPLASKVGAPAAPSVKPQQQQEPLAAVRPPLG) is disordered. The IQ domain maps to 4872–4901 (MDKAAVKIQAAFKGYKVRKEMKQQEGPMFS). 2 consecutive Ig-like domains span residues 4898–4989 (PMFS…VVVS) and 5126–5215 (PVFL…AELR). Intrachain disulfides connect cysteine 4919-cysteine 4971 and cysteine 5147-cysteine 5199. Polar residues predominate over residues 5238 to 5256 (AQGYLSSREQEGTESTTDE). The tract at residues 5238–5257 (AQGYLSSREQEGTESTTDEG) is disordered. 2 consecutive Ig-like domains span residues 5260–5349 (PQVV…ARLL) and 5371–5467 (PRML…LHVS). Residues 5554 to 5596 (AKLQVPGGDSDEDSKTPSASPRHGRSRPSSSIQESSSESEDGD) form a disordered region. At serine 5563 the chain carries Phosphoserine. Threonine 5569 bears the Phosphothreonine mark. Positions 5570–5589 (PSASPRHGRSRPSSSIQESS) are enriched in low complexity. A phosphoserine mark is found at serine 5571 and serine 5573. The SH3 domain maps to 5600–5667 (EIFDIYVVTA…SPAYLDRRLK (68 aa)). Positions 5693–5877 (RLSSVIQELL…SALPQRAENK (185 aa)) constitute a DH domain. Residues 5895 to 6004 (EPIRQGHFIV…WVKEICGIQQ (110 aa)) enclose the PH domain. Residue arginine 5975 participates in a 1,2-diacyl-sn-glycero-3-phospho-(1D-myo-inositol-4,5-bisphosphate) binding. Arginine 5980 serves as a coordination point for a 1,2-diacyl-sn-glycero-3-phospho-(1D-myo-inositol-3,4-bisphosphate). Ig-like domains follow at residues 6014–6097 (PDFE…GNCS) and 6108–6200 (PRFV…LRIQ). Cystine bridges form between cysteine 6035–cysteine 6087 and cysteine 6129–cysteine 6182. The interval 6237 to 6296 (RLLGPKAPGPSTGDLTGPGPCPRGAPALQETGSQPPVTGTSEAPAVPPRVPQPLLHEGPE) is disordered. Residues 6266 to 6277 (ETGSQPPVTGTS) show a composition bias toward polar residues. An Ig-like 54 domain is found at 6357 to 6445 (PSMQVTIEDV…GQVLCKAELL (89 aa)). One can recognise a Protein kinase 1 domain in the interval 6468–6721 (YEVKEEIGRG…AAQCLSHPWF (254 aa)). Residues 6474–6482 (IGRGVFGFV) and lysine 6497 contribute to the ATP site. Aspartate 6587 acts as the Proton acceptor in catalysis. 3 disordered regions span residues 6777–6863 (GVAR…AQGC), 6952–7176 (SGTH…TMRK), and 7217–7272 (VSQS…TPWE). The residue at position 6831 (serine 6831) is a Phosphoserine. The span at 7052 to 7061 (AVAPCPPGSF) shows a compositional bias: pro residues. The span at 7115–7139 (SSPGSASQASSSQVSSLRVGSSQVG) shows a compositional bias: low complexity. The span at 7160–7172 (DSTPTLQRPQEQA) shows a compositional bias: polar residues. The span at 7227-7242 (EARAESQSEEQQEARA) shows a compositional bias: basic and acidic residues. Serine 7244 carries the phosphoserine modification. Residues 7463 to 7552 (PTFLRELSDE…GTVTTTGVLR (90 aa)) enclose the Ig-like 55 domain. A disulfide bond links cysteine 7484 and cysteine 7536. Residues 7557 to 7649 (PSSSPCPDIG…PSEQVLLGGP (93 aa)) form the Fibronectin type-III 4 domain. The Protein kinase 2 domain maps to 7672–7924 (FAFQTQIQRG…ASSCLQCPWL (253 aa)). ATP-binding positions include 7678-7686 (IQRGRFSVV) and lysine 7701. The active-site Proton acceptor is aspartate 7791.

The protein belongs to the protein kinase superfamily. CAMK Ser/Thr protein kinase family. In terms of assembly, interacts (via protein kinase domain 2) with CDH2 and (via protein kinase domain 1) with ATP1B1. Isoform 3 interacts with TTN/titin and calmodulin. Isoform 3 interacts with ANK1 isoform Mu17/ank1.5. It depends on Mg(2+) as a cofactor. In terms of processing, autophosphorylated by protein kinase domains 1 and 2.

The protein resides in the cytoplasm. It localises to the myofibril. The protein localises to the sarcomere. Its subcellular location is the m line. It is found in the z line. The protein resides in the cell membrane. It localises to the sarcolemma. The protein localises to the nucleus. The enzyme catalyses L-seryl-[protein] + ATP = O-phospho-L-seryl-[protein] + ADP + H(+). It catalyses the reaction L-threonyl-[protein] + ATP = O-phospho-L-threonyl-[protein] + ADP + H(+). Its function is as follows. Structural component of striated muscles which plays a role in myofibrillogenesis. Probably involved in the assembly of myosin into sarcomeric A bands in striated muscle. Has serine/threonine protein kinase activity and phosphorylates N-cadherin CDH2 and sodium/potassium-transporting ATPase subunit ATP1B1. Binds (via the PH domain) strongly to phosphatidylinositol 3,4-bisphosphate (PtdIns(3,4)P2) and phosphatidylinositol 4,5-bisphosphate (PtdIns(4,5)P2), and to a lesser extent to phosphatidylinositol 3-phosphate (PtdIns(3)P), phosphatidylinositol 4-phosphate (PtdIns(4)P), phosphatidylinositol 5-phosphate (PtdIns(5)P) and phosphatidylinositol 3,4,5-trisphosphate (PtdIns(3,4,5)P3). This is Obscurin (OBSCN) from Homo sapiens (Human).